Here is a 586-residue protein sequence, read N- to C-terminus: MASANALSSASVLCSSRQSKLGGGNQQQGQRVSYNKRTIRRFSVRANVKEIAFDQHSRAALQAGIDKLADCVGLTLGPRGRNVVLDEFGSPKVVNDGVTIARAIELPNAMENAGAALIREVASKTNDSAGDGTTTASILAREIIKHGLLSVTSGANPVSLKRGIDKTVQGLIEELQKKARPVKGRDDIRAVASISAGNDDLIGSMIADAIDKVGPDGVLSIESSSSFETTVEVEEGMEIDRGYISPQFVTNPEKLLAEFENARVLITDQKITAIKDIIPILEKTTQLRAPLLIIAEDVTGEALATLVVNKLRGVLNVVAVKAPGFGERRKAMLQDIAILTGAEYLAMDMSLLVENATIDQLGIARKVTISKDSTTLIADAASKDELQARIAQLKKELFETDSVYDSEKLAERIAKLSGGVAVIKVGAATETELEDRKLRIEDAKNATFAAIEEGIVPGGGAALVHLSTVIPAIKETFEDADERLGADIVQKALLSPAALIAQNAGVEGEVVVEKIMFSDWENGYNAMTDTYENLFEAGVIDPAKVTRCALQNAASVAGMVLTTQAIVVDKPKPKAPAAAAPEGLMV.

Residues 1-46 constitute a chloroplast transit peptide; sequence MASANALSSASVLCSSRQSKLGGGNQQQGQRVSYNKRTIRRFSVRA. The residue at position 90 (Ser-90) is a Phosphoserine.

It belongs to the chaperonin (HSP60) family. As to quaternary structure, part of the Cpn60 complex composed of 7 alpha and 7 beta subunits. This complex shows ATPase activity. The Cpn60 complex interacts with the Cpn10 complex. In terms of tissue distribution, expressed in leaves, stems, siliques and flowers.

It is found in the plastid. Its subcellular location is the chloroplast. Its function is as follows. Binds RuBisCO small and large subunits and is implicated in the assembly of the enzyme oligomer. Involved in protein assisted folding. Required for proper chloroplast development. The sequence is that of Chaperonin 60 subunit alpha 1, chloroplastic (CPN60A1) from Arabidopsis thaliana (Mouse-ear cress).